Here is a 352-residue protein sequence, read N- to C-terminus: Protein-glutamate methylesterase/protein-glutamine glutaminase 2 (352 aa).

The Response regulatory domain maps to 1–116; it reads MVVDDSAVVR…KQFLTDSADE (116 aa). Residue Asp50 is modified to 4-aspartylphosphate. A CheB-type methylesterase domain is found at 162–352; it reads AQTTERIVAI…MAREIVTQLQ (191 aa). Catalysis depends on residues Ser174, His200, and Asp296.

Belongs to the CheB family. In terms of processing, phosphorylated by CheA. Phosphorylation of the N-terminal regulatory domain activates the methylesterase activity.

It is found in the cytoplasm. The catalysed reaction is [protein]-L-glutamate 5-O-methyl ester + H2O = L-glutamyl-[protein] + methanol + H(+). It carries out the reaction L-glutaminyl-[protein] + H2O = L-glutamyl-[protein] + NH4(+). Involved in chemotaxis. Part of a chemotaxis signal transduction system that modulates chemotaxis in response to various stimuli. Catalyzes the demethylation of specific methylglutamate residues introduced into the chemoreceptors (methyl-accepting chemotaxis proteins or MCP) by CheR. Also mediates the irreversible deamidation of specific glutamine residues to glutamic acid. The sequence is that of Protein-glutamate methylesterase/protein-glutamine glutaminase 2 from Xanthomonas axonopodis pv. citri (strain 306).